A 380-amino-acid chain; its full sequence is Chaperone protein DnaJ (380 aa).

The J domain occupies Asp6–Gly71. A CR-type zinc finger spans residues Gly136–Glu215. 8 residues coordinate Zn(2+): Cys149, Cys152, Cys167, Cys170, Cys189, Cys192, Cys203, and Cys206. CXXCXGXG motif repeat units lie at residues Cys149–Gly156, Cys167–Gly174, Cys189–Gly196, and Cys203–Gly210.

The protein belongs to the DnaJ family. Homodimer. Zn(2+) is required as a cofactor.

Its subcellular location is the cytoplasm. In terms of biological role, participates actively in the response to hyperosmotic and heat shock by preventing the aggregation of stress-denatured proteins and by disaggregating proteins, also in an autonomous, DnaK-independent fashion. Unfolded proteins bind initially to DnaJ; upon interaction with the DnaJ-bound protein, DnaK hydrolyzes its bound ATP, resulting in the formation of a stable complex. GrpE releases ADP from DnaK; ATP binding to DnaK triggers the release of the substrate protein, thus completing the reaction cycle. Several rounds of ATP-dependent interactions between DnaJ, DnaK and GrpE are required for fully efficient folding. Also involved, together with DnaK and GrpE, in the DNA replication of plasmids through activation of initiation proteins. This chain is Chaperone protein DnaJ, found in Acetobacter pasteurianus (strain NBRC 105184 / IFO 3283-01).